Here is a 76-residue protein sequence, read N- to C-terminus: Omega-conotoxin-like TxO2 (76 aa).

The signal sequence occupies residues 1–22 (MKLTCVVIVAVLFLTAWTFVTA). Positions 23–52 (APHSSNALENLYLKAHHEMNNPEDSELNKR) are excised as a propeptide. Intrachain disulfides connect C53–C67, C60–C71, and C66–C75.

Belongs to the conotoxin O1 superfamily. Expressed by the venom duct.

The protein resides in the secreted. Functionally, omega-conotoxins act at presynaptic membranes, they bind and block voltage-gated calcium channels (Cav). The protein is Omega-conotoxin-like TxO2 of Conus textile (Cloth-of-gold cone).